A 113-amino-acid chain; its full sequence is 14 kDa zinc-binding protein (113 aa).

Residues 3–113 (IFGKIISKEI…GGRQMNWPPG (111 aa)) form the HIT domain. The Histidine triad motif signature appears at 97–101 (HIHVH).

In terms of assembly, homodimer.

The protein is 14 kDa zinc-binding protein of Brassica juncea (Indian mustard).